We begin with the raw amino-acid sequence, 177 residues long: uncharacterized protein (177 aa).

This is an uncharacterized protein from Treponema pallidum (strain Nichols).